The chain runs to 206 residues: MHNAKRAIFKKRENMQKSSHDSILECNAQAFFESLCQNVGENPTREGLLHTPKRIASAFSDMLNGYAKSPKQALGSVFEDGVCDEMIVLKKLHFYSICEHHLLPFFGHISIGYIPDKKLVGISGLARLTEVFTHRLQIQERLTAQIADALIAELKPKGAMIVCQARHLCLEMRSNVPQSHIITSALRGLFKKDSRTRAEFMQILKD.

3 residues coordinate Zn(2+): cysteine 98, histidine 101, and cysteine 169.

This sequence belongs to the GTP cyclohydrolase I family. In terms of assembly, toroid-shaped homodecamer, composed of two pentamers of five dimers.

It carries out the reaction GTP + H2O = 7,8-dihydroneopterin 3'-triphosphate + formate + H(+). Its pathway is cofactor biosynthesis; 7,8-dihydroneopterin triphosphate biosynthesis; 7,8-dihydroneopterin triphosphate from GTP: step 1/1. The chain is GTP cyclohydrolase 1 from Helicobacter hepaticus (strain ATCC 51449 / 3B1).